A 460-amino-acid polypeptide reads, in one-letter code: Dihydroorotate dehydrogenase (quinone), mitochondrial (460 aa).

A mitochondrion-targeting transit peptide spans 1-32 (MAGRAATSSAKWAREFLFRRVSSNPLGATRNC). A helical membrane pass occupies residues 53 to 69 (ILTGATIGLAIAGGAYV). FMN is bound by residues 141–145 (AGFDK) and Ser165. Lys145 is a substrate binding site. 190–194 (NRCGF) contacts substrate. The segment at 213–245 (RMLAETSATSSSPSDDVKPGGKSGPGILGVNLG) is disordered. 2 residues coordinate FMN: Asn243 and Asn274. A substrate-binding site is contributed by 274–279 (NVSSPN). Residue Ser277 is the Nucleophile of the active site. FMN contacts are provided by Lys319 and Ser347. 348-349 (NT) contributes to the substrate binding site. FMN is bound by residues Gly371, Gly400, and 421 to 422 (YT).

This sequence belongs to the dihydroorotate dehydrogenase family. Type 2 subfamily. FMN is required as a cofactor.

The protein localises to the mitochondrion inner membrane. The enzyme catalyses (S)-dihydroorotate + a quinone = orotate + a quinol. It participates in pyrimidine metabolism; UMP biosynthesis via de novo pathway; orotate from (S)-dihydroorotate (quinone route): step 1/1. In terms of biological role, catalyzes the conversion of dihydroorotate to orotate with quinone as electron acceptor. This is Dihydroorotate dehydrogenase (quinone), mitochondrial (PYRD) from Arabidopsis thaliana (Mouse-ear cress).